The following is a 207-amino-acid chain: HTH-type transcriptional regulator BetI 2 (207 aa).

The HTH tetR-type domain maps to 8–68 (PIRRQQLIKA…ATMRQILTDL (61 aa)). Residues 31–50 (TVMRIARHAGVSAGIISHYF) constitute a DNA-binding region (H-T-H motif).

It participates in amine and polyamine biosynthesis; betaine biosynthesis via choline pathway [regulation]. Functionally, repressor involved in the biosynthesis of the osmoprotectant glycine betaine. It represses transcription of the choline transporter BetT and the genes of BetAB involved in the synthesis of glycine betaine. The sequence is that of HTH-type transcriptional regulator BetI 2 from Chromohalobacter salexigens (strain ATCC BAA-138 / DSM 3043 / CIP 106854 / NCIMB 13768 / 1H11).